The chain runs to 1166 residues: Pesticidal crystal protein Cry1Ga (1166 aa).

The protein belongs to the delta endotoxin family.

Promotes colloidosmotic lysis by binding to the midgut epithelial cells of insects. The chain is Pesticidal crystal protein Cry1Ga (cry1Ga) from Bacillus thuringiensis.